A 95-amino-acid chain; its full sequence is Co-chaperonin GroES (95 aa).

This sequence belongs to the GroES chaperonin family. As to quaternary structure, heptamer of 7 subunits arranged in a ring. Interacts with the chaperonin GroEL.

Its subcellular location is the cytoplasm. In terms of biological role, together with the chaperonin GroEL, plays an essential role in assisting protein folding. The GroEL-GroES system forms a nano-cage that allows encapsulation of the non-native substrate proteins and provides a physical environment optimized to promote and accelerate protein folding. GroES binds to the apical surface of the GroEL ring, thereby capping the opening of the GroEL channel. This is Co-chaperonin GroES from Streptococcus equi subsp. equi (strain 4047).